Here is a 1323-residue protein sequence, read N- to C-terminus: Receptor tyrosine-protein kinase let-23 (1323 aa).

The N-terminal stretch at 1 to 20 is a signal peptide; the sequence is MRYPPSIGSILLIIPIFLTF. The Extracellular segment spans residues 21-818; the sequence is FGNSNAQLWK…DIASRQRKTR (798 aa). N-linked (GlcNAc...) asparagine glycosylation is found at Asn91 and Asn169. 11 disulfide bridges follow: Cys220/Cys228, Cys224/Cys236, Cys244/Cys251, Cys248/Cys262, Cys263/Cys271, Cys267/Cys279, Cys282/Cys291, Cys295/Cys322, Cys326/Cys337, Cys341/Cys356, and Cys359/Cys364. N-linked (GlcNAc...) asparagine glycosylation occurs at Asn255. A glycan (N-linked (GlcNAc...) asparagine) is linked at Asn376. 20 disulfide bridges follow: Cys520–Cys529, Cys524–Cys537, Cys540–Cys549, Cys553–Cys567, Cys570–Cys577, Cys574–Cys585, Cys588–Cys604, Cys608–Cys620, Cys623–Cys632, Cys627–Cys644, Cys647–Cys660, Cys670–Cys693, Cys696–Cys703, Cys700–Cys715, Cys717–Cys731, Cys735–Cys750, Cys753–Cys763, Cys757–Cys771, Cys774–Cys787, and Cys791–Cys805. Asn561 carries N-linked (GlcNAc...) asparagine glycosylation. Asn655 carries an N-linked (GlcNAc...) asparagine glycan. Asn746 is a glycosylation site (N-linked (GlcNAc...) asparagine). Asn776 is a glycosylation site (N-linked (GlcNAc...) asparagine). A helical transmembrane segment spans residues 819–839; the sequence is MVIIGSVLFGFAVMFLFILLV. At 840–1323 the chain is on the cytoplasmic side; it reads YWRCQRIGKK…EEVSQKETCL (484 aa). Residues 885 to 1152 form the Protein kinase domain; sequence TKLDKKLGAG…EFCKVPQLFL (268 aa). Residues 891–899 and Lys919 contribute to the ATP site; that span reads LGAGAFGTV. Asp1010 functions as the Proton acceptor in the catalytic mechanism. Positions 1265-1289 are enriched in polar residues; sequence GQTELSPSNGDYYNQPNTPSSSSGY. The segment at 1265 to 1323 is disordered; it reads GQTELSPSNGDYYNQPNTPSSSSGYYNEPHLKTKKPETSEEAEAVQYENEEVSQKETCL. Residues 1293–1302 are compositionally biased toward basic and acidic residues; the sequence is PHLKTKKPET. Over residues 1303-1315 the composition is skewed to acidic residues; it reads SEEAEAVQYENEE.

The protein belongs to the protein kinase superfamily. Tyr protein kinase family. EGF receptor subfamily. Expressed in vulval precursor cells (at protein level). Expressed in ALA neurons, 2 ventral head neurons, a single neuron in the tail, pharyngeal-intestinal valve and posterior arcade epithelial cells.

It is found in the apical cell membrane. Its subcellular location is the basolateral cell membrane. The enzyme catalyses L-tyrosyl-[protein] + ATP = O-phospho-L-tyrosyl-[protein] + ADP + H(+). Functionally, tyrosine-protein kinase receptor which, upon binding ligand lin-3, activates 2 signaling cascades: the let-60/Ras and MAP kinase signaling pathway and the let-60-independent phospholipase C-mediated Ca(2+) signaling pathway. Each pathway regulates distinct functions. By activating let-60/Ras, regulates larval development, induction of vulva cell precursors during vulva development, male spicule formation and posterior development of the epidermis. Probably by activating phospholipase plc-3 and inositol 1,4,5-trisphosphate receptor itr-1 signaling cascade downstream of ligand lin-3, plays a role in ovulation by promoting ovulatory gonadal sheath cell contractions. Probably by regulating neuronal transmission in ALA neurons, mediates, independently of let-60/Ras, the decrease in pharyngeal pumping and locomotion during the quiescent state that precedes each larval molt, downstream of lin-3 and upstream of plc-3. The protein is Receptor tyrosine-protein kinase let-23 of Caenorhabditis elegans.